The sequence spans 449 residues: Serum response factor homolog (449 aa).

The tract at residues 23–166 is disordered; that stretch reads LADPADMYGN…PPANGKKTKG (144 aa). A compositionally biased stretch (polar residues) spans 69–80; it reads QCQTLHSPQHAS. The segment covering 81–107 has biased composition (low complexity); the sequence is QQQQQQQQQQQQHQQQQQQQQQHPQQQ. At Ser-156 the chain carries Phosphoserine. One can recognise an MADS-box domain in the interval 167–225; it reads RVKIKMEYIDNKLRRYTTFSKRKTGIMKKAYELSTLTGTQVMLLVASETGHVYTFATRK. Disordered regions lie at residues 270 to 360 and 418 to 449; these read YNIA…GGGS and LTASGSGASGSGTPVKNDASADKPLTIKQEFD. Low complexity-rich tracts occupy residues 317-331 and 345-354; these read SAPPAASCSAATASS and TNSGPSTSTA.

As to expression, after germ band retraction, high levels of zygotic expression are observed in a distinct subset of peripheral tracheal cells distributed throughout the embryo and low levels in somatic muscle. Expressed in the future intervein tissue of the wing imaginal disk from the third instar larvae until eclosion of the adult fly (at protein level).

Its subcellular location is the nucleus. Required for the formation of intervein tissue of the wing. Acts in a dosage-dependent manner to suppress wing vein formation and promote development of intervein cells. Might play a role in the proper formation and maintenance of the trachea. The protein is Serum response factor homolog (bs) of Drosophila melanogaster (Fruit fly).